The primary structure comprises 410 residues: Serine hydroxymethyltransferase (410 aa).

Residues L119 and 123–125 contribute to the (6S)-5,6,7,8-tetrahydrofolate site; that span reads GHL. K228 carries the post-translational modification N6-(pyridoxal phosphate)lysine. Residue 351 to 353 participates in (6S)-5,6,7,8-tetrahydrofolate binding; it reads SPF.

The protein belongs to the SHMT family. In terms of assembly, homodimer. Requires pyridoxal 5'-phosphate as cofactor.

It localises to the cytoplasm. The catalysed reaction is (6R)-5,10-methylene-5,6,7,8-tetrahydrofolate + glycine + H2O = (6S)-5,6,7,8-tetrahydrofolate + L-serine. Its pathway is one-carbon metabolism; tetrahydrofolate interconversion. It participates in amino-acid biosynthesis; glycine biosynthesis; glycine from L-serine: step 1/1. In terms of biological role, catalyzes the reversible interconversion of serine and glycine with tetrahydrofolate (THF) serving as the one-carbon carrier. This reaction serves as the major source of one-carbon groups required for the biosynthesis of purines, thymidylate, methionine, and other important biomolecules. Also exhibits THF-independent aldolase activity toward beta-hydroxyamino acids, producing glycine and aldehydes, via a retro-aldol mechanism. This is Serine hydroxymethyltransferase from Clostridium perfringens (strain ATCC 13124 / DSM 756 / JCM 1290 / NCIMB 6125 / NCTC 8237 / Type A).